The sequence spans 433 residues: Dihydrolipoyllysine-residue acetyltransferase component of pyruvate dehydrogenase complex (433 aa).

Residues 2–77 (AFEFRLPDIG…VVGDVIVKID (76 aa)) form the Lipoyl-binding domain. K43 is modified (N6-lipoyllysine). Disordered regions lie at residues 80–134 (DAEE…PSVR) and 164–204 (YLNG…FPET). 2 stretches are compositionally biased toward basic and acidic residues: residues 84-103 (MQFK…KEQE) and 117-126 (EKTEVDESKT). Positions 128–165 (KAMPSVRKYARENGVNIKAVNGSGKNGRITKEDIDAYL) constitute a Peripheral subunit-binding (PSBD) domain. Positions 166–185 (NGGSSEEGSNTSAASESTSS) are enriched in low complexity. H404 is a catalytic residue.

This sequence belongs to the 2-oxoacid dehydrogenase family. As to quaternary structure, forms a 24-polypeptide structural core with octahedral symmetry. It depends on (R)-lipoate as a cofactor.

The enzyme catalyses N(6)-[(R)-dihydrolipoyl]-L-lysyl-[protein] + acetyl-CoA = N(6)-[(R)-S(8)-acetyldihydrolipoyl]-L-lysyl-[protein] + CoA. In terms of biological role, the pyruvate dehydrogenase complex catalyzes the overall conversion of pyruvate to acetyl-CoA and CO(2). It contains multiple copies of three enzymatic components: pyruvate dehydrogenase (E1), dihydrolipoamide acetyltransferase (E2) and lipoamide dehydrogenase (E3). This is Dihydrolipoyllysine-residue acetyltransferase component of pyruvate dehydrogenase complex (pdhC) from Staphylococcus epidermidis (strain ATCC 35984 / DSM 28319 / BCRC 17069 / CCUG 31568 / BM 3577 / RP62A).